Consider the following 158-residue polypeptide: 6,7-dimethyl-8-ribityllumazine synthase (158 aa).

5-amino-6-(D-ribitylamino)uracil-binding positions include Phe-22, 56 to 58, and 80 to 82; these read ALE and VVI. 85–86 serves as a coordination point for (2S)-2-hydroxy-3-oxobutyl phosphate; the sequence is ET. The active-site Proton donor is His-88. Asn-113 is a binding site for 5-amino-6-(D-ribitylamino)uracil. Residue Arg-127 participates in (2S)-2-hydroxy-3-oxobutyl phosphate binding.

It belongs to the DMRL synthase family.

The catalysed reaction is (2S)-2-hydroxy-3-oxobutyl phosphate + 5-amino-6-(D-ribitylamino)uracil = 6,7-dimethyl-8-(1-D-ribityl)lumazine + phosphate + 2 H2O + H(+). It participates in cofactor biosynthesis; riboflavin biosynthesis; riboflavin from 2-hydroxy-3-oxobutyl phosphate and 5-amino-6-(D-ribitylamino)uracil: step 1/2. In terms of biological role, catalyzes the formation of 6,7-dimethyl-8-ribityllumazine by condensation of 5-amino-6-(D-ribitylamino)uracil with 3,4-dihydroxy-2-butanone 4-phosphate. This is the penultimate step in the biosynthesis of riboflavin. The chain is 6,7-dimethyl-8-ribityllumazine synthase from Neisseria meningitidis serogroup C / serotype 2a (strain ATCC 700532 / DSM 15464 / FAM18).